The primary structure comprises 609 residues: Wee1-like protein kinase (609 aa).

The segment covering 1-10 (MAFRQSEHEM) has biased composition (basic and acidic residues). Disordered stretches follow at residues 1 to 88 (MAFR…SMSP) and 147 to 166 (PLHN…PFTP). Phosphoserine occurs at positions 23, 25, and 27. Over residues 37–48 (RFADDDFDKDTP) the composition is skewed to basic and acidic residues. The residue at position 47 (threonine 47) is a Phosphothreonine. Serine 52 carries the phosphoserine modification. Over residues 153–165 (LPTQDTANVNPFT) the composition is skewed to polar residues. Phosphothreonine is present on threonine 165. Serine 168 carries the post-translational modification Phosphoserine. Residues 239 to 517 (FMQVNVIGVG…SQSIFSHPIL (279 aa)) form the Protein kinase domain. Residues 245–253 (IGVGEFGVV) and lysine 268 each bind ATP. Aspartate 361 acts as the Proton acceptor in catalysis. Residues asparagine 366 and aspartate 412 each contribute to the Mg(2+) site.

It belongs to the protein kinase superfamily. Ser/Thr protein kinase family. WEE1 subfamily. It depends on Mg(2+) as a cofactor. In terms of processing, phosphorylated during M and G1 phases. Expressed in embryos; expression remains high in the proliferating cells of the central nervous system well after cells in the rest of the embryo have ceased dividing.

The protein localises to the nucleus. The catalysed reaction is L-tyrosyl-[protein] + ATP = O-phospho-L-tyrosyl-[protein] + ADP + H(+). Its activity is regulated as follows. Negatively regulated by phosphorylation in the M-phase. In terms of biological role, acts as a negative regulator of entry into mitosis (G2 to M transition). This kinase specifically phosphorylates and inactivates cyclin B1-complexed CDC2. The protein is Wee1-like protein kinase of Drosophila melanogaster (Fruit fly).